A 277-amino-acid polypeptide reads, in one-letter code: Probable septum site-determining protein MinC (277 aa).

Positions 107 to 168 (TEGLLPGRKG…ESGPQVSHYD (62 aa)) are disordered. A compositionally biased stretch (basic and acidic residues) spans 122–142 (GKPDGKAAEGRAPDHGTEGRA).

This sequence belongs to the MinC family. As to quaternary structure, interacts with MinD and FtsZ.

Functionally, cell division inhibitor that blocks the formation of polar Z ring septums. Rapidly oscillates between the poles of the cell to destabilize FtsZ filaments that have formed before they mature into polar Z rings. Prevents FtsZ polymerization. This is Probable septum site-determining protein MinC from Mesorhizobium japonicum (strain LMG 29417 / CECT 9101 / MAFF 303099) (Mesorhizobium loti (strain MAFF 303099)).